The chain runs to 359 residues: Chondroadherin (359 aa).

The N-terminal stretch at 1 to 22 (MVRPMLLLSLGLLAGLLPALAA) is a signal peptide. A disulfide bridge connects residues cysteine 23 and cysteine 38. Residues 23–52 (CPQNCHCHSDLQHVICDKVGLQKIPKVSEK) enclose the LRRNT domain. 9 LRR repeats span residues 76-97 (NLVS…AFRG), 100-121 (QLIY…AFDD), 124-145 (ELTY…LLSP), 148-169 (NLFI…AFQG), 172-193 (DLRW…ALDD), 196-217 (NLAK…ALSK), 220-241 (VVEE…AFQS), 245-266 (YLET…AFLG), and 269-290 (TLKH…FPFD). O-linked (GalNAc...) serine glycosylation occurs at serine 144. The 49-residue stretch at 300–348 (NPWKCTCQLRGLRRWLEAKASRPDATCASPAKFKGQHIRDTDAFRSCKF) folds into the LRRCT domain. Intrachain disulfides connect cysteine 304-cysteine 346 and cysteine 306-cysteine 326.

The protein belongs to the small leucine-rich proteoglycan (SLRP) family. SLRP class IV subfamily. Mostly monomeric. Interacts with collagen type II. In terms of tissue distribution, present in chondrocytes at all ages.

Its subcellular location is the secreted. The protein localises to the extracellular space. It is found in the extracellular matrix. Its function is as follows. Promotes attachment of chondrocytes, fibroblasts, and osteoblasts. This binding is mediated (at least for chondrocytes and fibroblasts) by the integrin alpha(2)beta(1). May play an important role in the regulation of chondrocyte growth and proliferation. The polypeptide is Chondroadherin (CHAD) (Homo sapiens (Human)).